A 226-amino-acid polypeptide reads, in one-letter code: Exopolysaccharide production protein ExoY (226 aa).

Residues 34 to 54 (VLAASVALLLFSPLFLLIMAL) traverse the membrane as a helical segment.

This sequence belongs to the bacterial sugar transferase family.

The protein resides in the cell membrane. Its pathway is glycan metabolism; exopolysaccharide biosynthesis. Functionally, needed for the addition of the first sugar (galactose) to the isoprenoid carrier. May function as a sugar transferase. This Rhizobium meliloti (strain 1021) (Ensifer meliloti) protein is Exopolysaccharide production protein ExoY (exoY).